The following is a 313-amino-acid chain: tRNA (guanine-N(7)-)-methyltransferase (313 aa).

Residues glutamate 33, glutamate 58, and aspartate 85 each contribute to the S-adenosyl-L-methionine site. Residues lysine 112, aspartate 144, and 177–180 (TRYE) each bind substrate.

It belongs to the class I-like SAM-binding methyltransferase superfamily. TrmB family.

It carries out the reaction guanosine(46) in tRNA + S-adenosyl-L-methionine = N(7)-methylguanosine(46) in tRNA + S-adenosyl-L-homocysteine. Its pathway is tRNA modification; N(7)-methylguanine-tRNA biosynthesis. Catalyzes the formation of N(7)-methylguanine at position 46 (m7G46) in tRNA. The chain is tRNA (guanine-N(7)-)-methyltransferase from Thermotoga maritima (strain ATCC 43589 / DSM 3109 / JCM 10099 / NBRC 100826 / MSB8).